A 560-amino-acid chain; its full sequence is DNA ligase B (560 aa).

Residue lysine 124 is the N6-AMP-lysine intermediate of the active site.

This sequence belongs to the NAD-dependent DNA ligase family. LigB subfamily.

The catalysed reaction is NAD(+) + (deoxyribonucleotide)n-3'-hydroxyl + 5'-phospho-(deoxyribonucleotide)m = (deoxyribonucleotide)n+m + AMP + beta-nicotinamide D-nucleotide.. In terms of biological role, catalyzes the formation of phosphodiester linkages between 5'-phosphoryl and 3'-hydroxyl groups in double-stranded DNA using NAD as a coenzyme and as the energy source for the reaction. The sequence is that of DNA ligase B from Escherichia coli O17:K52:H18 (strain UMN026 / ExPEC).